The chain runs to 189 residues: MQKVNDYMINSMQFLYLVASYLFGNILTAYIVTKWRHNVDIRDEGSGNPGARNMGRVYGKGYFVATFLGDAIKGAIVVSIAKYLFEDFTFVMLTLLAVIMGHIYPMLFKGKGGKGISTFIGGLIAFDYLIALTLVAVFIIFYLIFKGFTKPGLITIACLPLCMILYSYSIVTTILSALIIVLILYVNHE.

Transmembrane regions (helical) follow at residues 12 to 32 (MQFL…AYIV), 61 to 81 (GYFV…VSIA), 88 to 108 (FTFV…PMLF), 124 to 144 (IAFD…FYLI), and 164 to 184 (ILYS…VLIL).

It belongs to the PlsY family. As to quaternary structure, probably interacts with PlsX.

The protein resides in the cell membrane. The enzyme catalyses an acyl phosphate + sn-glycerol 3-phosphate = a 1-acyl-sn-glycero-3-phosphate + phosphate. It functions in the pathway lipid metabolism; phospholipid metabolism. In terms of biological role, catalyzes the transfer of an acyl group from acyl-phosphate (acyl-PO(4)) to glycerol-3-phosphate (G3P) to form lysophosphatidic acid (LPA). This enzyme utilizes acyl-phosphate as fatty acyl donor, but not acyl-CoA or acyl-ACP. The sequence is that of Glycerol-3-phosphate acyltransferase 1 from Bacillus anthracis.